Reading from the N-terminus, the 23-residue chain is Coenzyme PQQ synthesis protein A (23 aa).

Residues 15-19 constitute a cross-link (pyrroloquinoline quinone (Glu-Tyr)); it reads EVTLY.

Belongs to the PqqA family.

It functions in the pathway cofactor biosynthesis; pyrroloquinoline quinone biosynthesis. Its function is as follows. Required for coenzyme pyrroloquinoline quinone (PQQ) biosynthesis. PQQ is probably formed by cross-linking a specific glutamate to a specific tyrosine residue and excising these residues from the peptide. The chain is Coenzyme PQQ synthesis protein A from Colwellia psychrerythraea (strain 34H / ATCC BAA-681) (Vibrio psychroerythus).